The sequence spans 269 residues: NAD kinase (269 aa).

The Proton acceptor role is filled by Asp-45. NAD(+)-binding positions include 45-46 (DG), 122-123 (NE), Arg-149, Asp-151, and Ala-186.

Belongs to the NAD kinase family. A divalent metal cation serves as cofactor.

The protein resides in the cytoplasm. It carries out the reaction NAD(+) + ATP = ADP + NADP(+) + H(+). Involved in the regulation of the intracellular balance of NAD and NADP, and is a key enzyme in the biosynthesis of NADP. Catalyzes specifically the phosphorylation on 2'-hydroxyl of the adenosine moiety of NAD to yield NADP. In Staphylococcus saprophyticus subsp. saprophyticus (strain ATCC 15305 / DSM 20229 / NCIMB 8711 / NCTC 7292 / S-41), this protein is NAD kinase.